A 433-amino-acid polypeptide reads, in one-letter code: Probable mannose-6-phosphate isomerase (433 aa).

Positions 103, 105, 130, and 277 each coordinate Zn(2+). Arg-296 is a catalytic residue.

This sequence belongs to the mannose-6-phosphate isomerase type 1 family. The cofactor is Zn(2+).

It is found in the cytoplasm. It catalyses the reaction D-mannose 6-phosphate = D-fructose 6-phosphate. Its pathway is nucleotide-sugar biosynthesis; GDP-alpha-D-mannose biosynthesis; alpha-D-mannose 1-phosphate from D-fructose 6-phosphate: step 1/2. Its function is as follows. Involved in the synthesis of the GDP-mannose and dolichol-phosphate-mannose required for a number of critical mannosyl transfer reactions. The polypeptide is Probable mannose-6-phosphate isomerase (PMIH) (Echinococcus multilocularis (Fox tapeworm)).